The primary structure comprises 372 residues: MRSKVTGAKRWVVKIGSALLTADGKGLDRGAMAVWVEQMVALREAGVELVLVSSGAVAAGMSQLGWTARPSAMNELQAAASIGQMRLVQAWESSFGEHGKHTAQILLTHDDLSDRKRYLNARSTLRTLVDLGVVPVINENDTVVTDEIRFGDNDTLAALVANLVEADLLVILTDRDGMFDADPRNNPEAQLIYEARADDPSLDAVAGGTGGALGRGGMQTKLRAARLAARSGAHTIIIGGRIERVLDRLKAGERLGTLLSPERGMLAARKQWLAGHLQTRGTLVLDAGAVQALRQANKSLLPVGVKTVQGSFRRGEMVVCVGPDGLEVARGLANYSALEAQKIIGQSSDAIESLLGYSAEPELVHRDNLVLV.

K14 is a binding site for ATP. S54, D141, and N153 together coordinate substrate. 173–174 is a binding site for ATP; it reads TD. The region spanning 280–358 is the PUA domain; it reads RGTLVLDAGA…DAIESLLGYS (79 aa).

This sequence belongs to the glutamate 5-kinase family.

Its subcellular location is the cytoplasm. It carries out the reaction L-glutamate + ATP = L-glutamyl 5-phosphate + ADP. Its pathway is amino-acid biosynthesis; L-proline biosynthesis; L-glutamate 5-semialdehyde from L-glutamate: step 1/2. Catalyzes the transfer of a phosphate group to glutamate to form L-glutamate 5-phosphate. This is Glutamate 5-kinase from Pseudomonas putida (strain W619).